We begin with the raw amino-acid sequence, 191 residues long: Fe/S biogenesis protein NfuA (191 aa).

The [4Fe-4S] cluster site is built by cysteine 149 and cysteine 152.

Belongs to the NfuA family. Homodimer. [4Fe-4S] cluster serves as cofactor.

Functionally, involved in iron-sulfur cluster biogenesis. Binds a 4Fe-4S cluster, can transfer this cluster to apoproteins, and thereby intervenes in the maturation of Fe/S proteins. Could also act as a scaffold/chaperone for damaged Fe/S proteins. This chain is Fe/S biogenesis protein NfuA, found in Salmonella choleraesuis (strain SC-B67).